Consider the following 92-residue polypeptide: UPF0250 protein XCC3453 (92 aa).

The protein belongs to the UPF0250 family.

The chain is UPF0250 protein XCC3453 from Xanthomonas campestris pv. campestris (strain ATCC 33913 / DSM 3586 / NCPPB 528 / LMG 568 / P 25).